A 254-amino-acid polypeptide reads, in one-letter code: 3-oxo-5-alpha-steroid 4-dehydrogenase 2 (254 aa).

The next 4 helical transmembrane spans lie at 8–28, 72–92, 146–166, and 206–226; these read VPVL…LCFG, PRSL…AHYF, FSVG…SDCM, and LATW…FLGM.

The protein belongs to the steroid 5-alpha reductase family.

Its subcellular location is the microsome membrane. It localises to the endoplasmic reticulum membrane. It catalyses the reaction a 3-oxo-5alpha-steroid + NADP(+) = a 3-oxo-Delta(4)-steroid + NADPH + H(+). It carries out the reaction 17beta-hydroxy-5alpha-androstan-3-one + NADP(+) = testosterone + NADPH + H(+). The catalysed reaction is 5alpha-pregnane-3,20-dione + NADP(+) = progesterone + NADPH + H(+). In terms of biological role, converts testosterone (T) into 5-alpha-dihydrotestosterone (DHT) and progesterone or corticosterone into their corresponding 5-alpha-3-oxosteroids. It plays a central role in sexual differentiation and androgen physiology. In Mus musculus (Mouse), this protein is 3-oxo-5-alpha-steroid 4-dehydrogenase 2 (Srd5a2).